A 202-amino-acid chain; its full sequence is Glycerol-3-phosphate acyltransferase (202 aa).

6 helical membrane passes run 2–22 (MIIV…GFVI), 54–74 (FLVT…PLWL), 85–105 (FFTN…YPVY), 120–140 (VVLG…FIVL), 141–161 (KIFK…VIGS), and 162–182 (LIIQ…ILII).

Belongs to the PlsY family. Probably interacts with PlsX.

The protein localises to the cell membrane. It catalyses the reaction an acyl phosphate + sn-glycerol 3-phosphate = a 1-acyl-sn-glycero-3-phosphate + phosphate. Its pathway is lipid metabolism; phospholipid metabolism. Catalyzes the transfer of an acyl group from acyl-phosphate (acyl-PO(4)) to glycerol-3-phosphate (G3P) to form lysophosphatidic acid (LPA). This enzyme utilizes acyl-phosphate as fatty acyl donor, but not acyl-CoA or acyl-ACP. In Staphylococcus aureus (strain Mu3 / ATCC 700698), this protein is Glycerol-3-phosphate acyltransferase.